The following is a 230-amino-acid chain: Response regulator MprA (230 aa).

Residues 4–118 enclose the Response regulatory domain; it reads RILVVDDDRA…ELLARMRALL (115 aa). Asp-48 is modified (4-aspartylphosphate). The segment at residues 129-227 is a DNA-binding region (ompR/PhoB-type); it reads SPALTFLDLT…VRGVGYVLRE (99 aa).

Post-translationally, phosphorylated and dephosphorylated by MprB.

It localises to the cytoplasm. In terms of biological role, member of the two-component regulatory system MprB/MprA which contributes to maintaining a balance among several systems involved in stress resistance and is required for establishment and maintenance of persistent infection in the host. Functions as a transcriptional regulator that recognizes a 19-bp nucleotide motif comprizing two loosely conserved 8-bp direct DNA-binding motif repeats separated by a 3-bp spacer region. The sequence is that of Response regulator MprA (mprA) from Mycobacterium sp. (strain JLS).